We begin with the raw amino-acid sequence, 219 residues long: uncharacterized protein (219 aa).

This is an uncharacterized protein from Treponema pallidum (strain Nichols).